We begin with the raw amino-acid sequence, 596 residues long: Elongation factor 4 (596 aa).

The tr-type G domain occupies K2–V184. Residues D14 to T19 and N131 to D134 contribute to the GTP site.

This sequence belongs to the TRAFAC class translation factor GTPase superfamily. Classic translation factor GTPase family. LepA subfamily.

Its subcellular location is the cell inner membrane. It catalyses the reaction GTP + H2O = GDP + phosphate + H(+). Its function is as follows. Required for accurate and efficient protein synthesis under certain stress conditions. May act as a fidelity factor of the translation reaction, by catalyzing a one-codon backward translocation of tRNAs on improperly translocated ribosomes. Back-translocation proceeds from a post-translocation (POST) complex to a pre-translocation (PRE) complex, thus giving elongation factor G a second chance to translocate the tRNAs correctly. Binds to ribosomes in a GTP-dependent manner. This Shewanella frigidimarina (strain NCIMB 400) protein is Elongation factor 4.